Here is a 133-residue protein sequence, read N- to C-terminus: Small ribosomal subunit protein uS11 (133 aa).

It belongs to the universal ribosomal protein uS11 family. In terms of assembly, part of the 30S ribosomal subunit. Interacts with proteins S7 and S18. Binds to IF-3.

Located on the platform of the 30S subunit, it bridges several disparate RNA helices of the 16S rRNA. Forms part of the Shine-Dalgarno cleft in the 70S ribosome. This Burkholderia pseudomallei (strain 1106a) protein is Small ribosomal subunit protein uS11.